A 91-amino-acid chain; its full sequence is Ragulator complex protein LAMTOR5 homolog (91 aa).

Belongs to the LAMTOR5 family. Part of the Ragulator complex.

It is found in the cytoplasm. Its subcellular location is the lysosome. In terms of biological role, regulator of the TOR pathway, a signaling cascade that promotes cell growth in response to growth factors, energy levels, and amino acids. As part of the Ragulator complex, may activate the TOR signaling cascade in response to amino acids. The chain is Ragulator complex protein LAMTOR5 homolog from Nematostella vectensis (Starlet sea anemone).